Here is a 785-residue protein sequence, read N- to C-terminus: Cadherin-7 (785 aa).

The first 27 residues, 1-27, serve as a signal peptide directing secretion; that stretch reads MKLGKVEFCHFLQLIALFLCFSGMSQA. Positions 28 to 47 are excised as a propeptide; the sequence is ELSRSRSKPYFQSGRSRTKR. Topologically, residues 28–607 are extracellular; the sequence is ELSRSRSKPY…AYVLPAGLST (580 aa). Cadherin domains follow at residues 49–153, 154–262, 263–377, 378–482, and 482–599; these read WVWN…EPKF, LDGP…PPRF, PRRS…PPVF, SSPL…APEF, and FAMD…AEAY. N-linked (GlcNAc...) asparagine glycans are attached at residues Asn449 and Asn530. The chain crosses the membrane as a helical span at residues 608–628; the sequence is GALIAILACVLTLLVLILLIV. At 629-785 the chain is on the cytoplasmic side; sequence TMRRRKKEPL…YGTGQESLYS (157 aa).

It localises to the cell membrane. Functionally, cadherins are calcium-dependent cell adhesion proteins. They preferentially interact with themselves in a homophilic manner in connecting cells; cadherins may thus contribute to the sorting of heterogeneous cell types. In Homo sapiens (Human), this protein is Cadherin-7 (CDH7).